The sequence spans 572 residues: Cuticlin-6 (572 aa).

A signal peptide spans 1–24 (MRPIPYDISLSITSFLSLILICSA). Topologically, residues 25–541 (NPIDNGLVDS…PLPYPLINTN (517 aa)) are extracellular. Residues 47–216 (EVILLLDASG…QLDRALADSL (170 aa)) enclose the VWFA domain. Asn78 is a glycosylation site (N-linked (GlcNAc...) asparagine). Positions 233 to 479 (ICGPDRIGVK…GGCEGITPPQ (247 aa)) constitute a ZP domain. Residues 542–562 (LWIMGIITLTNIFVFILTVWF) traverse the membrane as a helical segment. At 563 to 572 (TFRKRRCKPA) the chain is on the cytoplasmic side.

The protein resides in the cell membrane. Its function is as follows. Plays a role in alae formation in dauer larvae probably by regulating cuticle assembly. The protein is Cuticlin-6 of Caenorhabditis elegans.